The following is a 248-amino-acid chain: MRTAIIAGNWKMNKTVKEAVELVKELKPLVKDAKCDVVVCPTYVCLPAVLEEVKGSNIKVGAQNMHFEESGAYTGEIAPKMLEELGVHYVIIGHSERRQYFNETDETVNKKVKKAFEHNLIPIVCCGESLEEREGNITEKVLEGQIKVGLKELSKEQVEKLVIAYEPIWAIGTGKTATDEQANETIGYIRTVVKDMYGENVADKVRIQYGGSVKPGTIKAQMAKEEIDGALVGGASLKAEDFAAIINY.

Residue 9-11 coordinates substrate; the sequence is NWK. Histidine 94 acts as the Electrophile in catalysis. Glutamate 166 (proton acceptor) is an active-site residue. Substrate is bound by residues glycine 172, serine 212, and 233–234; that span reads GG.

The protein belongs to the triosephosphate isomerase family. Homodimer.

It localises to the cytoplasm. It carries out the reaction D-glyceraldehyde 3-phosphate = dihydroxyacetone phosphate. It functions in the pathway carbohydrate biosynthesis; gluconeogenesis. It participates in carbohydrate degradation; glycolysis; D-glyceraldehyde 3-phosphate from glycerone phosphate: step 1/1. Its function is as follows. Involved in the gluconeogenesis. Catalyzes stereospecifically the conversion of dihydroxyacetone phosphate (DHAP) to D-glyceraldehyde-3-phosphate (G3P). The polypeptide is Triosephosphate isomerase (Clostridium botulinum (strain Langeland / NCTC 10281 / Type F)).